The sequence spans 387 residues: GTPase Obg (387 aa).

The 159-residue stretch at M1–L159 folds into the Obg domain. The 174-residue stretch at A160–E333 folds into the OBG-type G domain. GTP contacts are provided by residues G166–S173, F191–V195, D213–G216, N283–D286, and S314–F316. Residues S173 and T193 each coordinate Mg(2+). Residues A361–Q387 form a disordered region. Over residues D367–Q387 the composition is skewed to acidic residues.

The protein belongs to the TRAFAC class OBG-HflX-like GTPase superfamily. OBG GTPase family. In terms of assembly, monomer. Requires Mg(2+) as cofactor.

It localises to the cytoplasm. Its function is as follows. An essential GTPase which binds GTP, GDP and possibly (p)ppGpp with moderate affinity, with high nucleotide exchange rates and a fairly low GTP hydrolysis rate. Plays a role in control of the cell cycle, stress response, ribosome biogenesis and in those bacteria that undergo differentiation, in morphogenesis control. This chain is GTPase Obg, found in Colwellia psychrerythraea (strain 34H / ATCC BAA-681) (Vibrio psychroerythus).